The sequence spans 543 residues: Probable bifunctional tRNA threonylcarbamoyladenosine biosynthesis protein (543 aa).

The interval Met1–Trp329 is kae1. Fe cation is bound by residues His112, His116, and Tyr133. L-threonylcarbamoyladenylate-binding positions include Tyr133–Gly137, Asp165, Gly178, Glu182, and Asn262. Position 290 (Asp290) interacts with Fe cation. The Protein kinase domain occupies Ile342–Leu543. ATP is bound by residues Ile348–Ile356 and Lys369. Residue Asp461 is the Proton acceptor; for kinase activity of the active site.

This sequence in the N-terminal section; belongs to the KAE1 / TsaD family. It in the C-terminal section; belongs to the protein kinase superfamily. Tyr protein kinase family. BUD32 subfamily. In terms of assembly, component of the KEOPS complex that consists of Kae1, Bud32, Cgi121 and Pcc1; the whole complex dimerizes. Requires Fe(2+) as cofactor.

The protein localises to the cytoplasm. It catalyses the reaction L-seryl-[protein] + ATP = O-phospho-L-seryl-[protein] + ADP + H(+). The catalysed reaction is L-threonyl-[protein] + ATP = O-phospho-L-threonyl-[protein] + ADP + H(+). The enzyme catalyses L-threonylcarbamoyladenylate + adenosine(37) in tRNA = N(6)-L-threonylcarbamoyladenosine(37) in tRNA + AMP + H(+). Required for the formation of a threonylcarbamoyl group on adenosine at position 37 (t(6)A37) in tRNAs that read codons beginning with adenine. Is a component of the KEOPS complex that is probably involved in the transfer of the threonylcarbamoyl moiety of threonylcarbamoyl-AMP (TC-AMP) to the N6 group of A37. The Kae1 domain likely plays a direct catalytic role in this reaction. The Bud32 domain probably displays kinase activity that regulates Kae1 function. This is Probable bifunctional tRNA threonylcarbamoyladenosine biosynthesis protein from Methanococcus maripaludis (strain C6 / ATCC BAA-1332).